Here is a 711-residue protein sequence, read N- to C-terminus: Polyribonucleotide nucleotidyltransferase (711 aa).

Residues aspartate 490 and aspartate 496 each contribute to the Mg(2+) site. The KH domain occupies 557-616; that stretch reads PRIETMQIPTDKIREVIGSGGKVIREIVETSGAKVDINDDGIIKIASANGEAIKKAYEMI. The 69-residue stretch at 626-694 folds into the S1 motif domain; sequence GKVYTGTVVK…DRGKVRLSMK (69 aa).

This sequence belongs to the polyribonucleotide nucleotidyltransferase family. Mg(2+) serves as cofactor.

It localises to the cytoplasm. The catalysed reaction is RNA(n+1) + phosphate = RNA(n) + a ribonucleoside 5'-diphosphate. Its function is as follows. Involved in mRNA degradation. Catalyzes the phosphorolysis of single-stranded polyribonucleotides processively in the 3'- to 5'-direction. This Dinoroseobacter shibae (strain DSM 16493 / NCIMB 14021 / DFL 12) protein is Polyribonucleotide nucleotidyltransferase.